The sequence spans 294 residues: 4-hydroxy-tetrahydrodipicolinate synthase (294 aa).

Thr47 contacts pyruvate. The active-site Proton donor/acceptor is Tyr135. The Schiff-base intermediate with substrate role is filled by Lys163. Residue Ile206 participates in pyruvate binding.

This sequence belongs to the DapA family. In terms of assembly, homodimer.

The protein resides in the cytoplasm. The enzyme catalyses L-aspartate 4-semialdehyde + pyruvate = (2S,4S)-4-hydroxy-2,3,4,5-tetrahydrodipicolinate + H2O + H(+). It participates in amino-acid biosynthesis; L-lysine biosynthesis via DAP pathway; (S)-tetrahydrodipicolinate from L-aspartate: step 3/4. Its function is as follows. Catalyzes the condensation of (S)-aspartate-beta-semialdehyde [(S)-ASA] and pyruvate to 4-hydroxy-tetrahydrodipicolinate (HTPA). In Staphylococcus carnosus (strain TM300), this protein is 4-hydroxy-tetrahydrodipicolinate synthase.